The primary structure comprises 95 residues: Aspartyl/glutamyl-tRNA(Asn/Gln) amidotransferase subunit C (95 aa).

Belongs to the GatC family. As to quaternary structure, heterotrimer of A, B and C subunits.

The catalysed reaction is L-glutamyl-tRNA(Gln) + L-glutamine + ATP + H2O = L-glutaminyl-tRNA(Gln) + L-glutamate + ADP + phosphate + H(+). It catalyses the reaction L-aspartyl-tRNA(Asn) + L-glutamine + ATP + H2O = L-asparaginyl-tRNA(Asn) + L-glutamate + ADP + phosphate + 2 H(+). Functionally, allows the formation of correctly charged Asn-tRNA(Asn) or Gln-tRNA(Gln) through the transamidation of misacylated Asp-tRNA(Asn) or Glu-tRNA(Gln) in organisms which lack either or both of asparaginyl-tRNA or glutaminyl-tRNA synthetases. The reaction takes place in the presence of glutamine and ATP through an activated phospho-Asp-tRNA(Asn) or phospho-Glu-tRNA(Gln). The chain is Aspartyl/glutamyl-tRNA(Asn/Gln) amidotransferase subunit C from Rhizobium rhizogenes (strain K84 / ATCC BAA-868) (Agrobacterium radiobacter).